A 148-amino-acid chain; its full sequence is uncharacterized protein (148 aa).

3 helical membrane passes run 25 to 45 (FCTV…LLTA), 85 to 105 (IVRF…LLYL), and 118 to 138 (LAAT…WVFG).

This sequence belongs to the GtrA family.

The protein resides in the cell membrane. This is an uncharacterized protein from Bacillus subtilis (strain 168).